The chain runs to 718 residues: U-box domain-containing protein 5 (718 aa).

In terms of domain architecture, U-box spans 218–292; it reads TLPEKFKCTL…SEWCAKNGLD (75 aa). ARM repeat units lie at residues 493-532, 534-571, and 573-613; these read PHGPSKITSSGSLSSLLKIVESQAEHLQEQAMITLKNLSS, MEICLEMVSLDFIQKLTSFLQQKVFCKHSIIILKNLCS, and EKGR…QLCV. Positions 662 to 704 are disordered; sequence KEEEEEVSSRPEGRTTASPTSQVVTPVTHPEPVKITPSPKKSG. Positions 676–686 are enriched in polar residues; the sequence is TTASPTSQVVT.

The catalysed reaction is S-ubiquitinyl-[E2 ubiquitin-conjugating enzyme]-L-cysteine + [acceptor protein]-L-lysine = [E2 ubiquitin-conjugating enzyme]-L-cysteine + N(6)-ubiquitinyl-[acceptor protein]-L-lysine.. It functions in the pathway protein modification; protein ubiquitination. Functionally, functions as an E3 ubiquitin ligase. This Arabidopsis thaliana (Mouse-ear cress) protein is U-box domain-containing protein 5 (PUB5).